Consider the following 115-residue polypeptide: MKPGIHPEYREIVFVDVSNNFSFKTRSTMATKETIKWEDGNEYPLAKIETSSESHPFYTGTQKIMDTAGRVEKFRQKFGSKAVAKASGDGAAKTAEKKAAAAEAKAAEKPVKKKA.

This sequence belongs to the bacterial ribosomal protein bL31 family. Type B subfamily. Part of the 50S ribosomal subunit.

The chain is Large ribosomal subunit protein bL31B from Polynucleobacter necessarius subsp. necessarius (strain STIR1).